Consider the following 447-residue polypeptide: Teichoic acids export ATP-binding protein TagH (447 aa).

The region spanning 24 to 246 (DKLKTLFSVF…YRAFLHRYNH (223 aa)) is the ABC transporter domain. An ATP-binding site is contributed by 60–67 (GLNGSGKS). The segment at 247–447 (FTEPQKESYQ…QVLKLKEVTE (201 aa)) is unknown. The segment at 359–393 (NAVKTTKTKPASTKESRQQEEVQPSPTNVPENNNS) is disordered. Polar residues-rich tracts occupy residues 360–369 (AVKTTKTKPA) and 379–393 (EVQP…NNNS). The 45-residue stretch at 398-442 (STYTVEVGDSVSLIAENHGLTIEQLQTLNPEIIEVPIYPGQVLKL) folds into the LysM domain.

The protein belongs to the ABC transporter superfamily. Teichoic acids exporter (TC 3.A.1.104.1) family. In terms of assembly, the complex is composed of two ATP-binding proteins (TagH) and two transmembrane proteins (TagG).

It is found in the cell membrane. The catalysed reaction is ATP + H2O + teichoic acidSide 1 = ADP + phosphate + teichoic acidSide 2.. Its function is as follows. Part of the ABC transporter complex TagGH involved in teichoic acids export. Responsible for energy coupling to the transport system. This Enterococcus faecalis (strain ATCC 700802 / V583) protein is Teichoic acids export ATP-binding protein TagH.